A 187-amino-acid chain; its full sequence is Cytochrome c oxidase assembly protein CtaG (187 aa).

Over 1-9 the chain is Cytoplasmic; that stretch reads MSKKSNKNL. Residues 10-30 traverse the membrane as a helical; Signal-anchor for type II membrane protein segment; that stretch reads AFSLLGLIISMVLLSFASVPI. The Periplasmic segment spans residues 31-187; the sequence is YNLFCKVTGY…IASLRGNTKY (157 aa).

The protein belongs to the COX11/CtaG family.

It localises to the cell inner membrane. In terms of biological role, exerts its effect at some terminal stage of cytochrome c oxidase synthesis, probably by being involved in the insertion of the copper B into subunit I. The chain is Cytochrome c oxidase assembly protein CtaG from Rickettsia felis (strain ATCC VR-1525 / URRWXCal2) (Rickettsia azadi).